We begin with the raw amino-acid sequence, 330 residues long: 3'-5' exonuclease (330 aa).

Positions 1–92 (MDQYLIKMST…DGTPSPEKEI (92 aa)) are disordered. Basic and acidic residues-rich tracts occupy residues 27-39 (NTTR…KEKI) and 48-66 (KDTP…ENPP). Residues Ser-79 and Ser-87 each carry the phosphoserine modification. In terms of domain architecture, 3'-5' exonuclease spans 117–289 (SADEVMQWVE…IGQVIYRDIE (173 aa)). 3 residues coordinate Mg(2+): Asp-139, Glu-141, and Asp-277.

The protein belongs to the WRNexo family.

The protein resides in the nucleus. Its function is as follows. Has exonuclease activity on both single-stranded and duplex templates bearing overhangs, but not blunt ended duplex DNA, and cleaves in a 3'-5' direction. Essential for the formation of DNA replication focal centers. Has an important role in maintaining genome stability. This Drosophila virilis (Fruit fly) protein is 3'-5' exonuclease.